A 207-amino-acid polypeptide reads, in one-letter code: N-(5'-phosphoribosyl)anthranilate isomerase (207 aa).

This sequence belongs to the TrpF family.

The catalysed reaction is N-(5-phospho-beta-D-ribosyl)anthranilate = 1-(2-carboxyphenylamino)-1-deoxy-D-ribulose 5-phosphate. Its pathway is amino-acid biosynthesis; L-tryptophan biosynthesis; L-tryptophan from chorismate: step 3/5. The polypeptide is N-(5'-phosphoribosyl)anthranilate isomerase (Legionella pneumophila (strain Lens)).